Consider the following 64-residue polypeptide: Cytochrome c oxidase subunit 2 (64 aa).

Residues 1–14 (MAHPSQLGFQDAAS) lie on the Mitochondrial intermembrane side of the membrane. The chain crosses the membrane as a helical span at residues 15-45 (PVMEELXHFHDHTLMIVFLISTLVXYIIVAM). Residues 46 to 64 (VSTKLTNKYVLDSQEIEIV) lie on the Mitochondrial matrix side of the membrane.

This sequence belongs to the cytochrome c oxidase subunit 2 family. In terms of assembly, component of the cytochrome c oxidase (complex IV, CIV), a multisubunit enzyme composed of 14 subunits. The complex is composed of a catalytic core of 3 subunits MT-CO1, MT-CO2 and MT-CO3, encoded in the mitochondrial DNA, and 11 supernumerary subunits COX4I, COX5A, COX5B, COX6A, COX6B, COX6C, COX7A, COX7B, COX7C, COX8 and NDUFA4, which are encoded in the nuclear genome. The complex exists as a monomer or a dimer and forms supercomplexes (SCs) in the inner mitochondrial membrane with NADH-ubiquinone oxidoreductase (complex I, CI) and ubiquinol-cytochrome c oxidoreductase (cytochrome b-c1 complex, complex III, CIII), resulting in different assemblies (supercomplex SCI(1)III(2)IV(1) and megacomplex MCI(2)III(2)IV(2)). Found in a complex with TMEM177, COA6, COX18, COX20, SCO1 and SCO2. Interacts with TMEM177 in a COX20-dependent manner. Interacts with COX20. Interacts with COX16. It depends on Cu cation as a cofactor.

Its subcellular location is the mitochondrion inner membrane. The enzyme catalyses 4 Fe(II)-[cytochrome c] + O2 + 8 H(+)(in) = 4 Fe(III)-[cytochrome c] + 2 H2O + 4 H(+)(out). Functionally, component of the cytochrome c oxidase, the last enzyme in the mitochondrial electron transport chain which drives oxidative phosphorylation. The respiratory chain contains 3 multisubunit complexes succinate dehydrogenase (complex II, CII), ubiquinol-cytochrome c oxidoreductase (cytochrome b-c1 complex, complex III, CIII) and cytochrome c oxidase (complex IV, CIV), that cooperate to transfer electrons derived from NADH and succinate to molecular oxygen, creating an electrochemical gradient over the inner membrane that drives transmembrane transport and the ATP synthase. Cytochrome c oxidase is the component of the respiratory chain that catalyzes the reduction of oxygen to water. Electrons originating from reduced cytochrome c in the intermembrane space (IMS) are transferred via the dinuclear copper A center (CU(A)) of subunit 2 and heme A of subunit 1 to the active site in subunit 1, a binuclear center (BNC) formed by heme A3 and copper B (CU(B)). The BNC reduces molecular oxygen to 2 water molecules using 4 electrons from cytochrome c in the IMS and 4 protons from the mitochondrial matrix. The protein is Cytochrome c oxidase subunit 2 (mt-co2) of Scaphirhynchus platorynchus (Shovelnose sturgeon).